The following is a 420-amino-acid chain: Serine--tRNA ligase (420 aa).

L-serine is bound at residue T227–E229. ATP is bound by residues R258 to E260 and V274. Residue E281 participates in L-serine binding. Residue E345–S348 participates in ATP binding. An L-serine-binding site is contributed by T380.

Belongs to the class-II aminoacyl-tRNA synthetase family. Type-1 seryl-tRNA synthetase subfamily. Homodimer. The tRNA molecule binds across the dimer.

The protein resides in the cytoplasm. It carries out the reaction tRNA(Ser) + L-serine + ATP = L-seryl-tRNA(Ser) + AMP + diphosphate + H(+). The catalysed reaction is tRNA(Sec) + L-serine + ATP = L-seryl-tRNA(Sec) + AMP + diphosphate + H(+). It participates in aminoacyl-tRNA biosynthesis; selenocysteinyl-tRNA(Sec) biosynthesis; L-seryl-tRNA(Sec) from L-serine and tRNA(Sec): step 1/1. In terms of biological role, catalyzes the attachment of serine to tRNA(Ser). Is also able to aminoacylate tRNA(Sec) with serine, to form the misacylated tRNA L-seryl-tRNA(Sec), which will be further converted into selenocysteinyl-tRNA(Sec). The protein is Serine--tRNA ligase of Nocardia farcinica (strain IFM 10152).